Reading from the N-terminus, the 362-residue chain is Cobalt-precorrin-5B C(1)-methyltransferase (362 aa).

It belongs to the CbiD family.

The catalysed reaction is Co-precorrin-5B + S-adenosyl-L-methionine = Co-precorrin-6A + S-adenosyl-L-homocysteine. The protein operates within cofactor biosynthesis; adenosylcobalamin biosynthesis; cob(II)yrinate a,c-diamide from sirohydrochlorin (anaerobic route): step 6/10. Its function is as follows. Catalyzes the methylation of C-1 in cobalt-precorrin-5B to form cobalt-precorrin-6A. This Burkholderia orbicola (strain MC0-3) protein is Cobalt-precorrin-5B C(1)-methyltransferase.